Consider the following 319-residue polypeptide: Acetyl-coenzyme A carboxylase carboxyl transferase subunit alpha (319 aa).

Positions 35 to 296 (DLDKELEQLE…KATLLRQLAD (262 aa)) constitute a CoA carboxyltransferase C-terminal domain.

This sequence belongs to the AccA family. In terms of assembly, acetyl-CoA carboxylase is a heterohexamer composed of biotin carboxyl carrier protein (AccB), biotin carboxylase (AccC) and two subunits each of ACCase subunit alpha (AccA) and ACCase subunit beta (AccD).

Its subcellular location is the cytoplasm. It carries out the reaction N(6)-carboxybiotinyl-L-lysyl-[protein] + acetyl-CoA = N(6)-biotinyl-L-lysyl-[protein] + malonyl-CoA. The protein operates within lipid metabolism; malonyl-CoA biosynthesis; malonyl-CoA from acetyl-CoA: step 1/1. In terms of biological role, component of the acetyl coenzyme A carboxylase (ACC) complex. First, biotin carboxylase catalyzes the carboxylation of biotin on its carrier protein (BCCP) and then the CO(2) group is transferred by the carboxyltransferase to acetyl-CoA to form malonyl-CoA. This Vibrio cholerae serotype O1 (strain ATCC 39541 / Classical Ogawa 395 / O395) protein is Acetyl-coenzyme A carboxylase carboxyl transferase subunit alpha.